A 398-amino-acid chain; its full sequence is Lysophospholipid transporter LplT (398 aa).

11 consecutive transmembrane segments (helical) span residues 17–37 (AVLV…FAIL), 52–72 (ILQI…GQIA), 90–110 (LGAF…LVGV), 137–157 (GLME…GGFL), 163–183 (AIAL…NFFI), 226–246 (LFWG…PVVL), 256–276 (ILNV…ARFI), 285–305 (MPAG…HSIW), 309–329 (VLLI…NALL), 352–372 (IAML…VPVV), and 373–393 (TTGI…WIWN).

The protein belongs to the major facilitator superfamily. LplT (TC 2.A.1.42) family.

Its subcellular location is the cell inner membrane. Catalyzes the facilitated diffusion of 2-acyl-glycero-3-phosphoethanolamine (2-acyl-GPE) into the cell. The chain is Lysophospholipid transporter LplT from Photorhabdus laumondii subsp. laumondii (strain DSM 15139 / CIP 105565 / TT01) (Photorhabdus luminescens subsp. laumondii).